The chain runs to 578 residues: Acyl-coenzyme A synthetase ACSM5, mitochondrial (578 aa).

The N-terminal 22 residues, methionine 1–isoleucine 22, are a transit peptide targeting the mitochondrion. Lysine 96 is modified (N6-acetyllysine; alternate). Lysine 96 is subject to N6-succinyllysine; alternate. Lysine 151 carries the N6-acetyllysine modification. Threonine 229–lysine 237 serves as a coordination point for ATP. N6-acetyllysine is present on lysine 335. Residues glutamate 367–serine 372, aspartate 454, arginine 469, and lysine 565 contribute to the ATP site.

It belongs to the ATP-dependent AMP-binding enzyme family. Mg(2+) serves as cofactor. The cofactor is Mn(2+).

It localises to the mitochondrion matrix. The catalysed reaction is a medium-chain fatty acid + ATP + CoA = a medium-chain fatty acyl-CoA + AMP + diphosphate. Catalyzes the activation of fatty acids by CoA to produce an acyl-CoA, the first step in fatty acid metabolism. This Rattus norvegicus (Rat) protein is Acyl-coenzyme A synthetase ACSM5, mitochondrial (Acsm5).